The primary structure comprises 708 residues: Exocyst complex component 5 (708 aa).

At A2 the chain carries N-acetylalanine. Residues 40 to 101 adopt a coiled-coil conformation; that stretch reads KRLLEEFVNH…AFQHFQELDE (62 aa). 3 positions are modified to phosphothreonine: T122, T395, and T405. At S412 the chain carries Phosphoserine.

It belongs to the SEC10 family. In terms of assembly, the exocyst complex is composed of EXOC1, EXOC2, EXOC3, EXOC4, EXOC5, EXOC6, EXOC7 and EXOC8. Interacts with EXOC3L1. As to expression, ubiquitous.

The protein resides in the cytoplasm. The protein localises to the midbody. Functionally, component of the exocyst complex involved in the docking of exocytic vesicles with fusion sites on the plasma membrane. The protein is Exocyst complex component 5 (Exoc5) of Rattus norvegicus (Rat).